Consider the following 838-residue polypeptide: Translation initiation factor IF-2 (838 aa).

Residues 1–235 (MSDTDGKKPL…RSLAAMKREQ (235 aa)) are disordered. Residues 18 to 27 (SGQVKQSFSH) are compositionally biased toward polar residues. The segment covering 50–60 (SGSSTTTSSPS) has biased composition (low complexity). A compositionally biased stretch (basic and acidic residues) spans 88-156 (KLREVDDAKR…AARRAEEAKR (69 aa)). Residues 162-177 (PAAAQPDAADSRASAP) show a composition bias toward low complexity. Residues 187 to 208 (SRKEREREADRDRTTKKDDSRR) are compositionally biased toward basic and acidic residues. The 175-residue stretch at 335 to 509 (PRPPIITIMG…ELLDLRANPK (175 aa)) folds into the tr-type G domain. The segment at 344–351 (GHVDHGKT) is G1. 344 to 351 (GHVDHGKT) contacts GTP. The G2 stretch occupies residues 369-373 (GITQH). The G3 stretch occupies residues 391–394 (DTPG). GTP contacts are provided by residues 391–395 (DTPGH) and 445–448 (NKID). Residues 445 to 448 (NKID) are G4. Residues 481–483 (SAK) are G5.

Belongs to the TRAFAC class translation factor GTPase superfamily. Classic translation factor GTPase family. IF-2 subfamily.

The protein localises to the cytoplasm. In terms of biological role, one of the essential components for the initiation of protein synthesis. Protects formylmethionyl-tRNA from spontaneous hydrolysis and promotes its binding to the 30S ribosomal subunits. Also involved in the hydrolysis of GTP during the formation of the 70S ribosomal complex. The chain is Translation initiation factor IF-2 from Cereibacter sphaeroides (strain ATCC 17025 / ATH 2.4.3) (Rhodobacter sphaeroides).